A 403-amino-acid polypeptide reads, in one-letter code: Semaphorin-like protein A39 (403 aa).

The signal sequence occupies residues 1 to 14 (MIPLLFILFYFANG). In terms of domain architecture, Sema spans 15–403 (IEWHKFETSE…MPQMKKILKM (389 aa)).

The protein belongs to the semaphorin family. In terms of assembly, interacts with host VESPR.

The protein resides in the secreted. Its function is as follows. Acts as a semaphorin-like protein and binds to host plexin C1 receptor. May alter the movement of host plexin C1-expressing cells including dendritic cells, monocytes, or granulocytes in the proximity of infected cells. May also regulate host cell cytoskeleton of neighboring cells to improve viral infection. The polypeptide is Semaphorin-like protein A39 (Homo sapiens (Human)).